A 709-amino-acid chain; its full sequence is Ribosomal RNA large subunit methyltransferase K/L (709 aa).

Positions 43–154 (LAYRITLWTR…NGVITIAMNF (112 aa)) constitute a THUMP domain.

This sequence belongs to the methyltransferase superfamily. RlmKL family.

The protein resides in the cytoplasm. The catalysed reaction is guanosine(2445) in 23S rRNA + S-adenosyl-L-methionine = N(2)-methylguanosine(2445) in 23S rRNA + S-adenosyl-L-homocysteine + H(+). It carries out the reaction guanosine(2069) in 23S rRNA + S-adenosyl-L-methionine = N(2)-methylguanosine(2069) in 23S rRNA + S-adenosyl-L-homocysteine + H(+). Its function is as follows. Specifically methylates the guanine in position 2445 (m2G2445) and the guanine in position 2069 (m7G2069) of 23S rRNA. The chain is Ribosomal RNA large subunit methyltransferase K/L from Shewanella baltica (strain OS185).